Consider the following 1284-residue polypeptide: Neurexin-4 (1284 aa).

Residues 1–35 (MRPPRSNTKAAFSSLQFGLLCLLLLVNNGIKSVQA) form the signal peptide. Residues 36 to 1217 (DAFTDYFSDY…LRKAYNEVDS (1182 aa)) are Extracellular-facing. An F5/8 type C domain is found at 47–185 (CNQPLMERAV…ISMRVELYGC (139 aa)). A disulfide bond links C47 and C185. Residues N195, N329, N340, and N398 are each glycosylated (N-linked (GlcNAc...) asparagine). In terms of domain architecture, Laminin G-like 1 spans 220-369 (FKTAFANGVM…FTRVNTIYAC (150 aa)). C333 and C369 are disulfide-bonded. The 138-residue stretch at 403–540 (FRTYEETGVM…CGDDVVVDAC (138 aa)) folds into the Laminin G-like 2 domain. 4 disulfide bridges follow: C507–C540, C546–C557, C551–C566, and C568–C578. An EGF-like 1 domain is found at 542-579 (MIDRCNPNPCQHKGLCHQNSREFFCDCGHTGYAGAVCH). An N-linked (GlcNAc...) asparagine glycan is attached at N668. The Laminin G-like 3 domain maps to 824–962 (FRTTQENSVI…RGLYGISTGC (139 aa)). Cystine bridges form between C934–C962, C966–C977, C971–C986, and C988–C998. One can recognise an EGF-like 2 domain in the interval 962 to 999 (CVGRCESNPCLNNGTCIERYDGYSCDCRWSAFKGPICA). N974 carries N-linked (GlcNAc...) asparagine glycosylation. The region spanning 1032–1183 (FTTTIPKGFL…LGTQLTEDFC (152 aa)) is the Laminin G-like 4 domain. Residues N1047 and N1137 are each glycosylated (N-linked (GlcNAc...) asparagine). The cysteines at positions 1147 and 1183 are disulfide-linked. The chain crosses the membrane as a helical span at residues 1218-1238 (VLLACLLVILFLLLILMFFLI). Topologically, residues 1239 to 1284 (GRYLHRHKGDYLTHEDQGADGADDPDDAVLHSTTGHQVRKRTEIFI) are cytoplasmic.

Belongs to the neurexin family. In terms of assembly, forms a complex with Nrg and Cont. Forms a complex composed of septa junction proteins Nrx-IV/Nrx, Tsf2/MTf, Cont and Nrg during late embryogenesis. The C-terminal region interacts with coracle. Interacts with Patj in cis form. In terms of tissue distribution, found in septate junctions of epithelial and glial cells.

It is found in the cell membrane. The protein localises to the cell junction. Its subcellular location is the septate junction. Seems to play a role in the formation and function of septate junctions. Septate junctions, which are the equivalent of vertebrates tight junctions, are characterized by regular arrays of transverse structures that span the intermembrane space and form a physical barrier to diffusion. Required for the blood-brain barrier formation. The polypeptide is Neurexin-4 (Nrx-IV) (Drosophila melanogaster (Fruit fly)).